The sequence spans 232 residues: Vacuolar iron transporter homolog 1 (232 aa).

Residues M1 to R59 are Cytoplasmic-facing. The helical transmembrane segment at A60 to G80 threads the bilayer. The Vacuolar segment spans residues A81–M89. Residues L90–V110 form a helical membrane-spanning segment. The Cytoplasmic portion of the chain corresponds to S111–A148. A helical membrane pass occupies residues V149–V169. Over R170–R175 the chain is Vacuolar. The helical transmembrane segment at V176–Y196 threads the bilayer. Over L197 to R208 the chain is Cytoplasmic. The chain crosses the membrane as a helical span at residues M209–M229. Over H230–V232 the chain is Vacuolar.

This sequence belongs to the CCC1 family.

The protein resides in the vacuole membrane. It carries out the reaction Fe(2+)(in) = Fe(2+)(out). In terms of biological role, probable vacuolar iron transporter that may be involved in the regulation of iron distribution throughout the plant. The sequence is that of Vacuolar iron transporter homolog 1 from Oryza sativa subsp. japonica (Rice).